We begin with the raw amino-acid sequence, 92 residues long: PqqA binding protein (92 aa).

This sequence belongs to the PqqD family. In terms of assembly, monomer. Interacts with PqqE.

It participates in cofactor biosynthesis; pyrroloquinoline quinone biosynthesis. Its function is as follows. Functions as a PqqA binding protein and presents PqqA to PqqE, in the pyrroloquinoline quinone (PQQ) biosynthetic pathway. This is PqqA binding protein from Azotobacter vinelandii (strain DJ / ATCC BAA-1303).